The chain runs to 210 residues: N-(5'-phosphoribosyl)anthranilate isomerase (210 aa).

This sequence belongs to the TrpF family.

The enzyme catalyses N-(5-phospho-beta-D-ribosyl)anthranilate = 1-(2-carboxyphenylamino)-1-deoxy-D-ribulose 5-phosphate. It functions in the pathway amino-acid biosynthesis; L-tryptophan biosynthesis; L-tryptophan from chorismate: step 3/5. In Pseudomonas fluorescens (strain ATCC BAA-477 / NRRL B-23932 / Pf-5), this protein is N-(5'-phosphoribosyl)anthranilate isomerase.